Here is a 287-residue protein sequence, read N- to C-terminus: Ethanolamine ammonia-lyase small subunit (287 aa).

Val-168, Glu-189, and Cys-218 together coordinate adenosylcob(III)alamin.

The protein belongs to the EutC family. As to quaternary structure, the basic unit is a heterodimer which dimerizes to form tetramers. The heterotetramers trimerize; 6 large subunits form a core ring with 6 small subunits projecting outwards. Adenosylcob(III)alamin serves as cofactor.

The protein resides in the bacterial microcompartment. The enzyme catalyses ethanolamine = acetaldehyde + NH4(+). It functions in the pathway amine and polyamine degradation; ethanolamine degradation. Catalyzes the deamination of various vicinal amino-alcohols to oxo compounds. Allows this organism to utilize ethanolamine as the sole source of nitrogen and carbon in the presence of external vitamin B12. The chain is Ethanolamine ammonia-lyase small subunit from Pseudomonas syringae pv. tomato (strain ATCC BAA-871 / DC3000).